A 464-amino-acid chain; its full sequence is ATP synthase subunit beta (464 aa).

Residue 154–161 (GGAGVGKT) participates in ATP binding.

This sequence belongs to the ATPase alpha/beta chains family. F-type ATPases have 2 components, CF(1) - the catalytic core - and CF(0) - the membrane proton channel. CF(1) has five subunits: alpha(3), beta(3), gamma(1), delta(1), epsilon(1). CF(0) has three main subunits: a(1), b(2) and c(9-12). The alpha and beta chains form an alternating ring which encloses part of the gamma chain. CF(1) is attached to CF(0) by a central stalk formed by the gamma and epsilon chains, while a peripheral stalk is formed by the delta and b chains.

The protein resides in the cell membrane. It carries out the reaction ATP + H2O + 4 H(+)(in) = ADP + phosphate + 5 H(+)(out). In terms of biological role, produces ATP from ADP in the presence of a proton gradient across the membrane. The catalytic sites are hosted primarily by the beta subunits. The polypeptide is ATP synthase subunit beta (Mycoplasmopsis synoviae (strain 53) (Mycoplasma synoviae)).